An 89-amino-acid polypeptide reads, in one-letter code: Ubiquinol-cytochrome-c reductase complex assembly factor 3 (89 aa).

The Mitochondrial matrix portion of the chain corresponds to 1–7; it reads MEAARKA. A helical transmembrane segment spans residues 8-28; sequence LAVVAVLGAGGGVGSILFALV. The interval 23-80 is mediates lipid-binding; that stretch reads ILFALVTPGELQKQLMLQEMPERDSRRRDEAVRTKELVMATLKDAAATKENVAWRRNW. The Mitochondrial intermembrane segment spans residues 29-89; sequence TPGELQKQLM…WTVRGDGRSA (61 aa).

This sequence belongs to the UQCC3 family. Associates with the ubiquinol-cytochrome c reductase complex (mitochondrial respiratory chain complex III(CIII) or cytochrome b-c1 complex). Interacts with UQCC1. Forms a complex, named COMC, composed of UQCC1, UQCC2; UQCC3 and UQCC4; mediates MT-CYB hemylation and association with the first nuclear-encoded complex III subunit UQCRQ. Probably cleaved by OMA1 under mitochondrial stress conditions.

Its subcellular location is the mitochondrion inner membrane. Its function is as follows. Required for the assembly of the ubiquinol-cytochrome c reductase complex (mitochondrial respiratory chain complex III or cytochrome b-c1 complex), mediating cytochrome b recruitment and probably stabilization within the complex. Thereby, plays an important role in ATP production by mitochondria. Cardiolipin-binding protein, it may also control the cardiolipin composition of mitochondria membranes and their morphology. The chain is Ubiquinol-cytochrome-c reductase complex assembly factor 3 from Rattus norvegicus (Rat).